The chain runs to 133 residues: FPRL1 inhibitory protein (133 aa).

Positions 1-28 (MKKNITKTIIASTVIAAGLLTQTNDAKA) are cleaved as a signal peptide.

This sequence belongs to the CHIPS/FLIPr family.

The protein resides in the secreted. Its function is as follows. May be involved in countering the first line of host defense mechanisms. Impairs the leukocyte response to FPRL1 agonists by binding directly to host FPRL1. The polypeptide is FPRL1 inhibitory protein (flr) (Staphylococcus aureus (strain USA300)).